Reading from the N-terminus, the 317-residue chain is Ribosomal RNA small subunit methyltransferase H (317 aa).

Residues 39 to 41 (GGH), aspartate 59, phenylalanine 83, aspartate 104, and glutamine 111 contribute to the S-adenosyl-L-methionine site.

This sequence belongs to the methyltransferase superfamily. RsmH family.

Its subcellular location is the cytoplasm. The enzyme catalyses cytidine(1402) in 16S rRNA + S-adenosyl-L-methionine = N(4)-methylcytidine(1402) in 16S rRNA + S-adenosyl-L-homocysteine + H(+). Functionally, specifically methylates the N4 position of cytidine in position 1402 (C1402) of 16S rRNA. The chain is Ribosomal RNA small subunit methyltransferase H from Paraburkholderia phymatum (strain DSM 17167 / CIP 108236 / LMG 21445 / STM815) (Burkholderia phymatum).